A 783-amino-acid chain; its full sequence is Tripartite motif-containing protein 67 (783 aa).

The segment at 7 to 42 adopts an RING-type; degenerate zinc-finger fold; the sequence is CPVCGSLFREPIILPCSHNVCLPCARTIAVQTPDGE. The B box-type 1; degenerate zinc-finger motif lies at 206-253; sequence AICQLCDRTPPEPAATLCEQCDVLYCSACQLKCHPSRGPFAKHRLVQP. The tract at residues 247 to 295 is disordered; the sequence is KHRLVQPPPPPPPPAEAASGPTGTAQGAPSGGGGCKSPGGAGAGATGGS. Residues 252-261 are compositionally biased toward pro residues; the sequence is QPPPPPPPPA. Gly residues predominate over residues 275-293; sequence PSGGGGCKSPGGAGAGATG. A B box-type 2 zinc finger spans residues 298-340; it reads RKFPTCPEHEMENYSMYCVSCRTPVCYLCLEEGRHAKHEVKPL. Positions 303, 306, 326, and 332 each coordinate Zn(2+). Residues 345–382 are a coiled coil; sequence KQHKAQLSQALNGVSDKAKEAKEFLVQLKNILQQIQEN. The COS domain occupies 448-506; sequence IKENDPSGFLQISDALIKRVQVSQEQWVKGALEPKVSAEFDLTLDSEPLLQAIHQLDFI. Residues 513–607 enclose the Fibronectin type-III domain; sequence PPVPLLQLEK…KTVVLQTSDV (95 aa). In terms of domain architecture, B30.2/SPRY spans 589-780; it reads NSSGVGPYSK…VPTNLGRPKL (192 aa).

It belongs to the TRIM/RBCC family.

Its subcellular location is the cytoplasm. It is found in the cytoskeleton. The polypeptide is Tripartite motif-containing protein 67 (TRIM67) (Homo sapiens (Human)).